A 256-amino-acid polypeptide reads, in one-letter code: Pyridoxine 5'-phosphate synthase (256 aa).

Positions 8 and 19 each coordinate 3-amino-2-oxopropyl phosphate. His44 serves as the catalytic Proton acceptor. 1-deoxy-D-xylulose 5-phosphate contacts are provided by Arg46 and His51. Residue Glu74 is the Proton acceptor of the active site. Position 111 (Thr111) interacts with 1-deoxy-D-xylulose 5-phosphate. The Proton donor role is filled by His202. Residues Asp203 and 225–226 contribute to the 3-amino-2-oxopropyl phosphate site; that span reads GH.

This sequence belongs to the PNP synthase family. Homooctamer; tetramer of dimers.

It localises to the cytoplasm. The enzyme catalyses 3-amino-2-oxopropyl phosphate + 1-deoxy-D-xylulose 5-phosphate = pyridoxine 5'-phosphate + phosphate + 2 H2O + H(+). It functions in the pathway cofactor biosynthesis; pyridoxine 5'-phosphate biosynthesis; pyridoxine 5'-phosphate from D-erythrose 4-phosphate: step 5/5. Catalyzes the complicated ring closure reaction between the two acyclic compounds 1-deoxy-D-xylulose-5-phosphate (DXP) and 3-amino-2-oxopropyl phosphate (1-amino-acetone-3-phosphate or AAP) to form pyridoxine 5'-phosphate (PNP) and inorganic phosphate. This chain is Pyridoxine 5'-phosphate synthase, found in Xanthomonas campestris pv. campestris (strain 8004).